Reading from the N-terminus, the 932-residue chain is 2-oxoglutarate dehydrogenase E1 component (932 aa).

Belongs to the alpha-ketoglutarate dehydrogenase family. In terms of assembly, homodimer. Part of the 2-oxoglutarate dehydrogenase (OGDH) complex composed of E1 (2-oxoglutarate dehydrogenase), E2 (dihydrolipoamide succinyltransferase) and E3 (dihydrolipoamide dehydrogenase); the complex contains multiple copies of the three enzymatic components (E1, E2 and E3). Thiamine diphosphate serves as cofactor.

The enzyme catalyses N(6)-[(R)-lipoyl]-L-lysyl-[protein] + 2-oxoglutarate + H(+) = N(6)-[(R)-S(8)-succinyldihydrolipoyl]-L-lysyl-[protein] + CO2. E1 component of the 2-oxoglutarate dehydrogenase (OGDH) complex which catalyzes the decarboxylation of 2-oxoglutarate, the first step in the conversion of 2-oxoglutarate to succinyl-CoA and CO(2). The sequence is that of 2-oxoglutarate dehydrogenase E1 component from Staphylococcus aureus (strain MW2).